An 86-amino-acid polypeptide reads, in one-letter code: U-myrmeciitoxin(01)-Mg1a (86 aa).

The N-terminal stretch at 1-26 (MKLLYLLLTLAIIFVLTIVHAPNVEA) is a signal peptide. Positions 27 to 52 (KALADPESDAVGFADAFGDADAEATG) are excised as a propeptide. A Leucine amide modification is found at L85.

It belongs to the formicidae venom precursor-01 superfamily. Expressed by the venom gland. This toxin is detected along the entire venom gland, as well as in the venom reservoir, the venom duct and in the venom. No toxin are detected in the Dufour's gland.

It is found in the secreted. Its subcellular location is the target cell membrane. Functionally, toxin that may interact with target cell membranes, producing a concentration-dependent leak in ion conductance, possibly via multimeric pore formation. It produces an immediate sharp increase of calcium concentration in all DRG neurons. This influx in calcium stabilizes without resulting in any observable dye leakage, showing that the effect is not simply cytolytic. This toxin may be one of the major contributors to the pain associated with envenomation. The toxin also displays a weak cytotoxicity (on HEK cells) and some antimicrobial activity (MIC=2.5 uM on C.neoformans (var. grubii), MIC=10.2 uM on S.aureus), but is not hemolytic to human erythtrocytes. In vivo, intraplantar injection into mice causes spontaneous nocifensive behavior (licking, flinching, or shaking of the paw), which lasts 5-7 minutes (10 and 100 uM tested). Mechanical and heat hypoalgesia are observed at 20 and 25 minutes after injection (highest dose tested of 100 uM). In vivo, injection into crickets (A.domesticus) causes an immediate, dose-dependent, reversible and nonlethal incapacitation that lasts about 53 minutes at the highest dose tested (60 ug/g). This Myrmecia gulosa (Red bulldog ant) protein is U-myrmeciitoxin(01)-Mg1a.